The chain runs to 301 residues: Probable alpha-L-glutamate ligase 2 (301 aa).

The 184-residue stretch at 104–287 folds into the ATP-grasp domain; it reads LQLLSRKSIG…VADKIIQFIE (184 aa). Residues K141, 178–179, D187, and 211–213 contribute to the ATP site; these read EY and RSN. D248, E260, and N262 together coordinate Mg(2+). 3 residues coordinate Mn(2+): D248, E260, and N262.

The protein belongs to the RimK family. Mg(2+) serves as cofactor. Mn(2+) is required as a cofactor.

The polypeptide is Probable alpha-L-glutamate ligase 2 (Shewanella denitrificans (strain OS217 / ATCC BAA-1090 / DSM 15013)).